Consider the following 226-residue polypeptide: Exosome complex component Rrp4 (226 aa).

The S1 motif domain maps to 61–135; the sequence is NDLVIGKVNS…RDPLVSISDR (75 aa). The KH domain occupies 141 to 200; the sequence is DSGVLMEISPSKVPRLIGKKGSMIQMIEEATDAAVTIGQNGWVVVSCESPEGLLKAKKAI.

It belongs to the RRP4 family. In terms of assembly, component of the archaeal exosome complex. Forms a trimer of Rrp4 and/or Csl4 subunits. The trimer associates with a hexameric ring-like arrangement composed of 3 Rrp41-Rrp42 heterodimers.

Its subcellular location is the cytoplasm. Functionally, non-catalytic component of the exosome, which is a complex involved in RNA degradation. Increases the RNA binding and the efficiency of RNA degradation. Confers strong poly(A) specificity to the exosome. The protein is Exosome complex component Rrp4 of Nitrosopumilus maritimus (strain SCM1).